Reading from the N-terminus, the 217-residue chain is Heart- and neural crest derivatives-expressed protein 2 (217 aa).

Positions 76–116 (DHSHYGGVPPGAGPPGLGGPRPVKRRGTANRKERRRTQSIN) are disordered. A compositionally biased stretch (gly residues) spans 83 to 94 (VPPGAGPPGLGG). A compositionally biased stretch (basic residues) spans 97–112 (PVKRRGTANRKERRRT). Residues 99–151 (KRRGTANRKERRRTQSINSAFAELRECIPNVPADTKLSKIKTLRLATSYIAYL) enclose the bHLH domain.

Efficient DNA binding requires dimerization with another bHLH protein. Forms homodimers and heterodimers with TCF3 gene products E12 and E47, HAND1 and HEY1, HEY2 and HEYL (hairy-related transcription factors).

The protein localises to the nucleus. Essential for cardiac morphogenesis, particularly for the formation of the right ventricle and of the aortic arch arteries. Required for vascular development and regulation of angiogenesis, possibly through a VEGF signaling pathway. Also plays an important role in limb development, particularly in the establishment of anterior-posterior polarization, acting as an upstream regulator of sonic hedgehog (SHH) induction in the limb bud. Is involved in the development of branchial arches, which give rise to unique structures in the head and neck. Binds DNA on E-box consensus sequence 5'-CANNTG-3'. The chain is Heart- and neural crest derivatives-expressed protein 2 (Hand2) from Rattus norvegicus (Rat).